The sequence spans 404 residues: Formate-dependent phosphoribosylglycinamide formyltransferase (404 aa).

Residues 25–26 (EL) and Glu-85 contribute to the N(1)-(5-phospho-beta-D-ribosyl)glycinamide site. ATP is bound by residues Arg-118, Lys-159, 164-169 (SSGKGQ), 199-202 (EGFI), and Glu-207. An ATP-grasp domain is found at 123–318 (RLAAEELGLP…EFELHARAIL (196 aa)). 2 residues coordinate Mg(2+): Glu-277 and Glu-289. N(1)-(5-phospho-beta-D-ribosyl)glycinamide contacts are provided by residues Asp-296, Lys-365, and 372-373 (RR). The disordered stretch occupies residues 384–404 (TDEARSRAKQAAAAVRPVSAK). Residues 392–404 (KQAAAAVRPVSAK) are compositionally biased toward low complexity.

The protein belongs to the PurK/PurT family. As to quaternary structure, homodimer.

The enzyme catalyses N(1)-(5-phospho-beta-D-ribosyl)glycinamide + formate + ATP = N(2)-formyl-N(1)-(5-phospho-beta-D-ribosyl)glycinamide + ADP + phosphate + H(+). Its pathway is purine metabolism; IMP biosynthesis via de novo pathway; N(2)-formyl-N(1)-(5-phospho-D-ribosyl)glycinamide from N(1)-(5-phospho-D-ribosyl)glycinamide (formate route): step 1/1. Functionally, involved in the de novo purine biosynthesis. Catalyzes the transfer of formate to 5-phospho-ribosyl-glycinamide (GAR), producing 5-phospho-ribosyl-N-formylglycinamide (FGAR). Formate is provided by PurU via hydrolysis of 10-formyl-tetrahydrofolate. In Paraburkholderia xenovorans (strain LB400), this protein is Formate-dependent phosphoribosylglycinamide formyltransferase.